The following is a 220-amino-acid chain: Vesicle-associated membrane protein 7 (220 aa).

N-acetylalanine is present on A2. Residues 2 to 188 are Cytoplasmic-facing; sequence AILFAVVARG…ARAMCMKNIK (187 aa). The 104-residue stretch at 7-110 folds into the Longin domain; that stretch reads VVARGTTILA…AMNSEFSSVL (104 aa). Residues 125–185 enclose the v-SNARE coiled-coil homology domain; the sequence is KVMETQAQVD…RNLARAMCMK (61 aa). A phosphoserine mark is found at S167 and S168. The helical; Anchor for type IV membrane protein transmembrane segment at 189-209 threads the bilayer; that stretch reads LTIIIIIVSIVFIYIIVSLLC. Topologically, residues 210 to 220 are vesicular; the sequence is GGFTWPNCVKK.

Belongs to the synaptobrevin family. Component of the SNARE complex composed of STX4, SNAP23 and VAMP7 that binds SYT7 during lysosomal exocytosis. Component of the SNARE complex composed of STX7, STX8, VAMP7 and VTI1B that is required for heterotypic fusion of late endosomes with lysosomes. May interact with STX17. Interacts with PICALM. Interacts with RAB21.

The protein resides in the cytoplasmic vesicle. It is found in the secretory vesicle membrane. It localises to the golgi apparatus. The protein localises to the trans-Golgi network membrane. Its subcellular location is the late endosome membrane. The protein resides in the lysosome membrane. It is found in the endoplasmic reticulum membrane. It localises to the phagosome membrane. The protein localises to the synapse. Its subcellular location is the synaptosome. In terms of biological role, involved in the targeting and/or fusion of transport vesicles to their target membrane during transport of proteins from the early endosome to the lysosome. Required for heterotypic fusion of late endosomes with lysosomes and homotypic lysosomal fusion. Required for calcium regulated lysosomal exocytosis. Involved in the export of chylomicrons from the endoplasmic reticulum to the cis Golgi. Required for exocytosis of mediators during eosinophil and neutrophil degranulation, and target cell killing by natural killer cells. Required for focal exocytosis of late endocytic vesicles during phagosome formation. The chain is Vesicle-associated membrane protein 7 (Vamp7) from Mus musculus (Mouse).